The primary structure comprises 353 residues: Photosystem II protein D1 (353 aa).

Residue Thr2 is modified to N-acetylthreonine. A Phosphothreonine modification is found at Thr2. The next 3 helical transmembrane spans lie at 29–46 (YIGW…TATS), 118–133 (HFLL…EWEL), and 142–156 (WIAV…AATA). Position 118 (His118) interacts with chlorophyll a. Pheophytin a is bound at residue Tyr126. Residues Asp170 and Glu189 each contribute to the [CaMn4O5] cluster site. Residues 197-218 (FHMLGVAGVFGGSLFSAMHGSL) form a helical membrane-spanning segment. His198 contacts chlorophyll a. Residues His215 and 264–265 (SF) contribute to the a quinone site. Position 215 (His215) interacts with Fe cation. His272 contacts Fe cation. Residues 274–288 (FLAAWPVVGIWFTAL) traverse the membrane as a helical segment. Positions 332, 333, 342, and 344 each coordinate [CaMn4O5] cluster. Positions 345 to 353 (AIEAPSTNG) are excised as a propeptide.

The protein belongs to the reaction center PufL/M/PsbA/D family. In terms of assembly, PSII is composed of 1 copy each of membrane proteins PsbA, PsbB, PsbC, PsbD, PsbE, PsbF, PsbH, PsbI, PsbJ, PsbK, PsbL, PsbM, PsbT, PsbX, PsbY, PsbZ, Psb30/Ycf12, at least 3 peripheral proteins of the oxygen-evolving complex and a large number of cofactors. It forms dimeric complexes. The D1/D2 heterodimer binds P680, chlorophylls that are the primary electron donor of PSII, and subsequent electron acceptors. It shares a non-heme iron and each subunit binds pheophytin, quinone, additional chlorophylls, carotenoids and lipids. D1 provides most of the ligands for the Mn4-Ca-O5 cluster of the oxygen-evolving complex (OEC). There is also a Cl(-1) ion associated with D1 and D2, which is required for oxygen evolution. The PSII complex binds additional chlorophylls, carotenoids and specific lipids. serves as cofactor. Tyr-161 forms a radical intermediate that is referred to as redox-active TyrZ, YZ or Y-Z. In terms of processing, C-terminally processed by CTPA; processing is essential to allow assembly of the oxygen-evolving complex and thus photosynthetic growth.

It is found in the plastid. It localises to the chloroplast thylakoid membrane. The enzyme catalyses 2 a plastoquinone + 4 hnu + 2 H2O = 2 a plastoquinol + O2. Its function is as follows. Photosystem II (PSII) is a light-driven water:plastoquinone oxidoreductase that uses light energy to abstract electrons from H(2)O, generating O(2) and a proton gradient subsequently used for ATP formation. It consists of a core antenna complex that captures photons, and an electron transfer chain that converts photonic excitation into a charge separation. The D1/D2 (PsbA/PsbD) reaction center heterodimer binds P680, the primary electron donor of PSII as well as several subsequent electron acceptors. This chain is Photosystem II protein D1, found in Nicotiana debneyi (Debney's tobacco).